Consider the following 252-residue polypeptide: Membrane protein insertase YidC (252 aa).

A signal peptide spans 1–19 (MKKVLWIIIIILMVGALAG). Cys-20 carries N-palmitoyl cysteine lipidation. A lipid anchor (S-diacylglycerol cysteine) is attached at Cys-20. Helical transmembrane passes span 34 to 54 (IWNHFFVYPLSWVLISVADLL), 58 to 78 (FGLSIIVVTIGIRLFLLPLMI), 131 to 151 (MAGCLPLFIQLPVMMAFYFAI), 162 to 182 (FLWFDLGSPDPLYILPVVAGI), 201 to 221 (VIIYIMPVMIVVAGVTLPSAL), and 223 to 243 (LYWVVGNLFMIIQTYFTVVRF).

The protein belongs to the OXA1/ALB3/YidC family. Type 2 subfamily.

It localises to the cell membrane. Functionally, required for the insertion and/or proper folding and/or complex formation of integral membrane proteins into the membrane. Involved in integration of membrane proteins that insert both dependently and independently of the Sec translocase complex, as well as at least some lipoproteins. This Alkalihalophilus pseudofirmus (strain ATCC BAA-2126 / JCM 17055 / OF4) (Bacillus pseudofirmus) protein is Membrane protein insertase YidC.